Reading from the N-terminus, the 259-residue chain is UPF0246 protein PFL_1025 (259 aa).

This sequence belongs to the UPF0246 family.

The sequence is that of UPF0246 protein PFL_1025 from Pseudomonas fluorescens (strain ATCC BAA-477 / NRRL B-23932 / Pf-5).